A 404-amino-acid polypeptide reads, in one-letter code: Cysteine desulfurase IscS (404 aa).

Residues 75-76, Asn-155, Gln-183, and 203-205 contribute to the pyridoxal 5'-phosphate site; these read AT and SGH. Residue Lys-206 is modified to N6-(pyridoxal phosphate)lysine. Residue Thr-243 coordinates pyridoxal 5'-phosphate. Cys-328 (cysteine persulfide intermediate) is an active-site residue. [2Fe-2S] cluster is bound at residue Cys-328.

This sequence belongs to the class-V pyridoxal-phosphate-dependent aminotransferase family. NifS/IscS subfamily. In terms of assembly, homodimer. Forms a heterotetramer with IscU, interacts with other sulfur acceptors. It depends on pyridoxal 5'-phosphate as a cofactor.

It is found in the cytoplasm. It carries out the reaction (sulfur carrier)-H + L-cysteine = (sulfur carrier)-SH + L-alanine. It functions in the pathway cofactor biosynthesis; iron-sulfur cluster biosynthesis. In terms of biological role, master enzyme that delivers sulfur to a number of partners involved in Fe-S cluster assembly, tRNA modification or cofactor biosynthesis. Catalyzes the removal of elemental sulfur atoms from cysteine to produce alanine. Functions as a sulfur delivery protein for Fe-S cluster synthesis onto IscU, an Fe-S scaffold assembly protein, as well as other S acceptor proteins. The protein is Cysteine desulfurase IscS of Edwardsiella ictaluri (strain 93-146).